Here is a 340-residue protein sequence, read N- to C-terminus: MNHRLSALVNGGFLSENEANKLMHDMMSGFLTDAEVAASLSILAHRGETAEEMTGFVKAMRQNAAPMERALDVVDTCGTGGDGLSTFNISTAAAIVRSAAGAKIAKHGNRSVSSKSGSADVLECLGIHIQSTPEETRRQIQEKNMGFLFAPLYHSSMKQVAAVRKQLGFRTVFNLLGPLCHPMQAKKQIIGVYSKEKAKLMAEALAPLEPEHVLFVCGEDGLDELTITANSYVIELKKDVMTEYTLNPEDFGLQKGYLSEIQVQSPEESAKLIQNILNHQTEGAPLHITALNAGAALYVAGKSESLMAGTLKAIETIKNGAAKEQLARLKQKTREEEIYA.

5-phospho-alpha-D-ribose 1-diphosphate is bound by residues G78, 81-82 (GD), T86, 88-91 (NIST), 106-114 (KHGNRSVSS), and S118. G78 serves as a coordination point for anthranilate. Residue S90 participates in Mg(2+) binding. N109 serves as a coordination point for anthranilate. R164 contributes to the anthranilate binding site. The Mg(2+) site is built by D223 and E224.

Belongs to the anthranilate phosphoribosyltransferase family. In terms of assembly, homodimer. The cofactor is Mg(2+).

It catalyses the reaction N-(5-phospho-beta-D-ribosyl)anthranilate + diphosphate = 5-phospho-alpha-D-ribose 1-diphosphate + anthranilate. It functions in the pathway amino-acid biosynthesis; L-tryptophan biosynthesis; L-tryptophan from chorismate: step 2/5. Catalyzes the transfer of the phosphoribosyl group of 5-phosphorylribose-1-pyrophosphate (PRPP) to anthranilate to yield N-(5'-phosphoribosyl)-anthranilate (PRA). In Bacillus pumilus (Bacillus mesentericus), this protein is Anthranilate phosphoribosyltransferase.